A 336-amino-acid polypeptide reads, in one-letter code: MAMSDRLLKAWYEGHPALALLRPLESLYRRVVQRKRTRFLAGEGEIYQSPVPVVVVGNITVGGTGKTPLILWLIEHCRRSGLRVGVVSRGYGAKPPQLPWRVEASHSADLAGDEPLLIVQRCGVPLMIDPDRSRAVKALLASETLDLILSDDGLQHYRLARDLELVLIDAARGLGNRRCLPAGPLREPVERLQSVDALLYNGAASDREDGFAFRLQPAALVNLQTGERQPVDHFAPGQQVHAVAGIGNPQRFFNTLETLHWQPISHAFADHAPYSAEVLNFTPSLPLVMTEKDAVKCRAFAQPDWWYLAVDALPSPAFVAWFDTQLMRLLPARLLP.

Residue 60-67 (TVGGTGKT) participates in ATP binding.

Belongs to the LpxK family.

It carries out the reaction a lipid A disaccharide + ATP = a lipid IVA + ADP + H(+). It participates in glycolipid biosynthesis; lipid IV(A) biosynthesis; lipid IV(A) from (3R)-3-hydroxytetradecanoyl-[acyl-carrier-protein] and UDP-N-acetyl-alpha-D-glucosamine: step 6/6. Transfers the gamma-phosphate of ATP to the 4'-position of a tetraacyldisaccharide 1-phosphate intermediate (termed DS-1-P) to form tetraacyldisaccharide 1,4'-bis-phosphate (lipid IVA). The chain is Tetraacyldisaccharide 4'-kinase from Pseudomonas fluorescens (strain SBW25).